The sequence spans 340 residues: MLDPLKVDSYDYHLPPHLIAKEPVQPADRAKLLIYDRKTDTITHTIFKNLPQFLPQKTHIVFNDTKVIKARIFGHKSSGGKIELLINRPLENERFNVFIRGKVKVGTTLHFSQGLQAIVEELIEDGTRIVTFYHDEKRLSFHELLPILDTIGSIPLPPYIDRAAKKEDETNYQPIFAKKAGAVAAPTASLHFTEQMLNSMAKEFPFHFVTLHVGAGTFKPVEANLITEHAMHSEYYEIPKDTIEVIESDEKVLAVGTTVTRTIEYYVRTKKSFGECDLFLNPLNPPKRVDHLLTNFHLPKSTLIMLVASFIGLETTKRVYQEAIEKEYRFYSYGDAMLIL.

This sequence belongs to the QueA family. As to quaternary structure, monomer.

The protein resides in the cytoplasm. It catalyses the reaction 7-aminomethyl-7-carbaguanosine(34) in tRNA + S-adenosyl-L-methionine = epoxyqueuosine(34) in tRNA + adenine + L-methionine + 2 H(+). It participates in tRNA modification; tRNA-queuosine biosynthesis. Transfers and isomerizes the ribose moiety from AdoMet to the 7-aminomethyl group of 7-deazaguanine (preQ1-tRNA) to give epoxyqueuosine (oQ-tRNA). This chain is S-adenosylmethionine:tRNA ribosyltransferase-isomerase, found in Nitratiruptor sp. (strain SB155-2).